Consider the following 464-residue polypeptide: DNA repair protein KRE29 (464 aa).

The interval 1–69 (MGSVNSSPNE…SDEEFSSLEN (69 aa)) is disordered. Residues 53–65 (PENDSLNSDEEFS) show a composition bias toward acidic residues. A phosphoserine mark is found at Ser81 and Ser101.

Component of the Smc5-Smc6 complex which consists of KRE29, MMS21, NSE1, NSE3, NSE4, NSE5, SMC5 and SMC6. Interacts with NSE5.

It localises to the nucleus. Its subcellular location is the cytoplasm. Its function is as follows. Acts in a DNA repair pathway for removal of UV-induced DNA damage that is distinct from classical nucleotide excision repair and in repair of ionizing radiation damage. Functions in homologous recombination repair of DNA double strand breaks and in recovery of stalled replication forks. This chain is DNA repair protein KRE29 (KRE29), found in Saccharomyces cerevisiae (strain ATCC 204508 / S288c) (Baker's yeast).